Reading from the N-terminus, the 466-residue chain is Adenosylhomocysteinase (466 aa).

Substrate-binding residues include threonine 57, aspartate 132, and glutamate 192. 193-195 (TTT) provides a ligand contact to NAD(+). 2 residues coordinate substrate: lysine 222 and aspartate 226. NAD(+)-binding positions include asparagine 227, 256 to 261 (GYGDVG), glutamate 279, asparagine 314, 335 to 337 (IGH), and asparagine 380.

Belongs to the adenosylhomocysteinase family. NAD(+) is required as a cofactor.

The protein localises to the cytoplasm. It carries out the reaction S-adenosyl-L-homocysteine + H2O = L-homocysteine + adenosine. Its pathway is amino-acid biosynthesis; L-homocysteine biosynthesis; L-homocysteine from S-adenosyl-L-homocysteine: step 1/1. May play a key role in the regulation of the intracellular concentration of adenosylhomocysteine. This chain is Adenosylhomocysteinase, found in Sinorhizobium medicae (strain WSM419) (Ensifer medicae).